Here is a 151-residue protein sequence, read N- to C-terminus: Large ribosomal subunit protein uL22 (151 aa).

Positions 1-18 (MARINYSINADPENTSKA) are enriched in polar residues. Residues 1-23 (MARINYSINADPENTSKAMGSEL) form a disordered region.

It belongs to the universal ribosomal protein uL22 family. Part of the 50S ribosomal subunit.

Functionally, this protein binds specifically to 23S rRNA. It makes multiple contacts with different domains of the 23S rRNA in the assembled 50S subunit and ribosome. The globular domain of the protein is located near the polypeptide exit tunnel on the outside of the subunit, while an extended beta-hairpin is found that lines the wall of the exit tunnel in the center of the 70S ribosome. The chain is Large ribosomal subunit protein uL22 from Methanosarcina mazei (strain ATCC BAA-159 / DSM 3647 / Goe1 / Go1 / JCM 11833 / OCM 88) (Methanosarcina frisia).